We begin with the raw amino-acid sequence, 441 residues long: ATP-dependent protease ATPase subunit HslU (441 aa).

ATP is bound by residues Ile-18, 60 to 65, Asp-254, Glu-319, and Arg-391; that span reads GVGKTE.

Belongs to the ClpX chaperone family. HslU subfamily. As to quaternary structure, a double ring-shaped homohexamer of HslV is capped on each side by a ring-shaped HslU homohexamer. The assembly of the HslU/HslV complex is dependent on binding of ATP.

The protein resides in the cytoplasm. Functionally, ATPase subunit of a proteasome-like degradation complex; this subunit has chaperone activity. The binding of ATP and its subsequent hydrolysis by HslU are essential for unfolding of protein substrates subsequently hydrolyzed by HslV. HslU recognizes the N-terminal part of its protein substrates and unfolds these before they are guided to HslV for hydrolysis. The polypeptide is ATP-dependent protease ATPase subunit HslU (Shewanella pealeana (strain ATCC 700345 / ANG-SQ1)).